The primary structure comprises 156 residues: Small ribosomal subunit protein uS7 (156 aa).

This sequence belongs to the universal ribosomal protein uS7 family. As to quaternary structure, part of the 30S ribosomal subunit. Contacts proteins S9 and S11.

Functionally, one of the primary rRNA binding proteins, it binds directly to 16S rRNA where it nucleates assembly of the head domain of the 30S subunit. Is located at the subunit interface close to the decoding center, probably blocks exit of the E-site tRNA. In Clostridium tetani (strain Massachusetts / E88), this protein is Small ribosomal subunit protein uS7.